Consider the following 450-residue polypeptide: Phosphoglucosamine mutase (450 aa).

The active-site Phosphoserine intermediate is the serine 103. Positions 103, 243, 245, and 247 each coordinate Mg(2+). The residue at position 103 (serine 103) is a Phosphoserine.

Belongs to the phosphohexose mutase family. Requires Mg(2+) as cofactor. Activated by phosphorylation.

It carries out the reaction alpha-D-glucosamine 1-phosphate = D-glucosamine 6-phosphate. Its function is as follows. Catalyzes the conversion of glucosamine-6-phosphate to glucosamine-1-phosphate. In Lactobacillus delbrueckii subsp. bulgaricus (strain ATCC 11842 / DSM 20081 / BCRC 10696 / JCM 1002 / NBRC 13953 / NCIMB 11778 / NCTC 12712 / WDCM 00102 / Lb 14), this protein is Phosphoglucosamine mutase.